A 113-amino-acid polypeptide reads, in one-letter code: uncharacterized protein (113 aa).

Disordered regions lie at residues 1–22 (MGEHAIKRHMRQRKPTKHPLAQ) and 90–113 (DGRHTTESSFEHSSPSRSPQSDDL). The span at 90–99 (DGRHTTESSF) shows a compositional bias: basic and acidic residues. Positions 100–113 (EHSSPSRSPQSDDL) are enriched in low complexity.

This is an uncharacterized protein from Mycobacterium tuberculosis (strain ATCC 25618 / H37Rv).